The following is a 178-amino-acid chain: ATP synthase subunit delta (178 aa).

It belongs to the ATPase delta chain family. As to quaternary structure, F-type ATPases have 2 components, F(1) - the catalytic core - and F(0) - the membrane proton channel. F(1) has five subunits: alpha(3), beta(3), gamma(1), delta(1), epsilon(1). F(0) has three main subunits: a(1), b(2) and c(10-14). The alpha and beta chains form an alternating ring which encloses part of the gamma chain. F(1) is attached to F(0) by a central stalk formed by the gamma and epsilon chains, while a peripheral stalk is formed by the delta and b chains.

The protein localises to the cell inner membrane. Its function is as follows. F(1)F(0) ATP synthase produces ATP from ADP in the presence of a proton or sodium gradient. F-type ATPases consist of two structural domains, F(1) containing the extramembraneous catalytic core and F(0) containing the membrane proton channel, linked together by a central stalk and a peripheral stalk. During catalysis, ATP synthesis in the catalytic domain of F(1) is coupled via a rotary mechanism of the central stalk subunits to proton translocation. Functionally, this protein is part of the stalk that links CF(0) to CF(1). It either transmits conformational changes from CF(0) to CF(1) or is implicated in proton conduction. The protein is ATP synthase subunit delta of Methylobacillus flagellatus (strain ATCC 51484 / DSM 6875 / VKM B-1610 / KT).